Consider the following 123-residue polypeptide: Holo-[acyl-carrier-protein] synthase (123 aa).

D8 and E60 together coordinate Mg(2+).

This sequence belongs to the P-Pant transferase superfamily. AcpS family. Requires Mg(2+) as cofactor.

It localises to the cytoplasm. It catalyses the reaction apo-[ACP] + CoA = holo-[ACP] + adenosine 3',5'-bisphosphate + H(+). Its function is as follows. Transfers the 4'-phosphopantetheine moiety from coenzyme A to a Ser of acyl-carrier-protein. The polypeptide is Holo-[acyl-carrier-protein] synthase (Ehrlichia ruminantium (strain Gardel)).